Here is a 70-residue protein sequence, read N- to C-terminus: Large ribosomal subunit protein bL31 (70 aa).

Residues Cys16, Cys18, Cys38, and Cys41 each coordinate Zn(2+).

It belongs to the bacterial ribosomal protein bL31 family. Type A subfamily. As to quaternary structure, part of the 50S ribosomal subunit. Zn(2+) serves as cofactor.

Its function is as follows. Binds the 23S rRNA. The protein is Large ribosomal subunit protein bL31 of Saccharopolyspora erythraea (strain ATCC 11635 / DSM 40517 / JCM 4748 / NBRC 13426 / NCIMB 8594 / NRRL 2338).